We begin with the raw amino-acid sequence, 595 residues long: Probable xyloglucan glycosyltransferase 9 (595 aa).

2 helical membrane passes run 30–50 (AFVVLSVLLLIVELGAYINGW) and 77–97 (ATYVAPFIQFLTDACVVLFLI). Asp-177 is an active-site residue. Substrate is bound by residues Asp-236 and Asp-238. Asp-330 is a catalytic residue. 4 helical membrane passes run 408-428 (LILPFYSFTLFCIILPMTMFV), 433-453 (LPDWVVCYIPALMSLLNILPS), 545-564 (IYKKELALSLLLLTAAARSL), and 570-590 (IHFYFLLFQGISFLLVGLDLI).

Belongs to the glycosyltransferase 2 family. Plant cellulose synthase-like C subfamily.

The protein resides in the golgi apparatus membrane. In terms of biological role, probable beta-1,4-glucan synthase rather involved in the synthesis of the xyloglucan backbone than cellulose. Seems to work simultaneously with xyloglucan 6-xylosyltransferase. Xyloglucan is a noncellulosic polysaccharides of plant cell wall and consists of a glucan backbone substituted by xylose, galactose and fucose. This is Probable xyloglucan glycosyltransferase 9 (CSLC9) from Oryza sativa subsp. japonica (Rice).